Consider the following 210-residue polypeptide: Endonuclease III (210 aa).

One can recognise a HhH domain in the interval 108–127 (RIELESLPGVGRKTANIILN). [4Fe-4S] cluster-binding residues include C187, C194, C197, and C203.

This sequence belongs to the Nth/MutY family. [4Fe-4S] cluster serves as cofactor.

The catalysed reaction is 2'-deoxyribonucleotide-(2'-deoxyribose 5'-phosphate)-2'-deoxyribonucleotide-DNA = a 3'-end 2'-deoxyribonucleotide-(2,3-dehydro-2,3-deoxyribose 5'-phosphate)-DNA + a 5'-end 5'-phospho-2'-deoxyribonucleoside-DNA + H(+). Its function is as follows. DNA repair enzyme that has both DNA N-glycosylase activity and AP-lyase activity. The DNA N-glycosylase activity releases various damaged pyrimidines from DNA by cleaving the N-glycosidic bond, leaving an AP (apurinic/apyrimidinic) site. The AP-lyase activity cleaves the phosphodiester bond 3' to the AP site by a beta-elimination, leaving a 3'-terminal unsaturated sugar and a product with a terminal 5'-phosphate. This is Endonuclease III from Buchnera aphidicola subsp. Acyrthosiphon pisum (strain APS) (Acyrthosiphon pisum symbiotic bacterium).